Consider the following 237-residue polypeptide: Chalcone--flavanone isomerase 1 (237 aa).

3 residues coordinate substrate: threonine 48, asparagine 113, and serine 190.

The protein belongs to the chalcone isomerase family.

The enzyme catalyses a chalcone = a flavanone.. The protein operates within secondary metabolite biosynthesis; flavonoid biosynthesis. Functionally, catalyzes the intramolecular cyclization of bicyclic chalcones into tricyclic (S)-flavanones. Responsible for the isomerization of 4,2',4',6'-tetrahydroxychalcone (also termed chalcone) into naringenin. The sequence is that of Chalcone--flavanone isomerase 1 (CHI1) from Fragaria ananassa (Strawberry).